A 160-amino-acid chain; its full sequence is Phosphopantetheine adenylyltransferase (160 aa).

Residue S9 coordinates substrate. ATP contacts are provided by residues 9-10 and H17; that span reads SL. Substrate-binding residues include K41, L74, and K88. ATP contacts are provided by residues 89 to 91, E99, and 123 to 129; these read GIR and YLHLSST.

Belongs to the bacterial CoaD family. As to quaternary structure, homohexamer. Requires Mg(2+) as cofactor.

The protein resides in the cytoplasm. The catalysed reaction is (R)-4'-phosphopantetheine + ATP + H(+) = 3'-dephospho-CoA + diphosphate. The protein operates within cofactor biosynthesis; coenzyme A biosynthesis; CoA from (R)-pantothenate: step 4/5. Its function is as follows. Reversibly transfers an adenylyl group from ATP to 4'-phosphopantetheine, yielding dephospho-CoA (dPCoA) and pyrophosphate. This Renibacterium salmoninarum (strain ATCC 33209 / DSM 20767 / JCM 11484 / NBRC 15589 / NCIMB 2235) protein is Phosphopantetheine adenylyltransferase.